Reading from the N-terminus, the 165-residue chain is Histone H1-like protein HC2 (165 aa).

Basic residues-rich tracts occupy residues 1–50 (MLGV…KTVA) and 59–80 (PVAKKATAKKAPVRKVAAKKTV). Positions 1 to 80 (MLGVQKKRST…VRKVAAKKTV (80 aa)) are disordered.

The protein belongs to the histone H1/H5 family. HCT subfamily.

Might have a role in establishing the nucleoid structure of elementary bodies. The sequence is that of Histone H1-like protein HC2 (hctB) from Chlamydia trachomatis.